Consider the following 199-residue polypeptide: Small ribosomal subunit protein uS4 (199 aa).

Residues 91–151 (SRLDNLVYRF…EKSKNVKAIA (61 aa)) form the S4 RNA-binding domain.

It belongs to the universal ribosomal protein uS4 family. In terms of assembly, part of the 30S ribosomal subunit. Contacts protein S5. The interaction surface between S4 and S5 is involved in control of translational fidelity.

In terms of biological role, one of the primary rRNA binding proteins, it binds directly to 16S rRNA where it nucleates assembly of the body of the 30S subunit. Its function is as follows. With S5 and S12 plays an important role in translational accuracy. This Exiguobacterium sp. (strain ATCC BAA-1283 / AT1b) protein is Small ribosomal subunit protein uS4.